A 290-amino-acid polypeptide reads, in one-letter code: 33 kDa chaperonin (290 aa).

2 cysteine pairs are disulfide-bonded: C235–C237 and C268–C271.

It belongs to the HSP33 family. Under oxidizing conditions two disulfide bonds are formed involving the reactive cysteines. Under reducing conditions zinc is bound to the reactive cysteines and the protein is inactive.

It is found in the cytoplasm. In terms of biological role, redox regulated molecular chaperone. Protects both thermally unfolding and oxidatively damaged proteins from irreversible aggregation. Plays an important role in the bacterial defense system toward oxidative stress. The protein is 33 kDa chaperonin of Streptococcus equi subsp. equi (strain 4047).